The sequence spans 299 residues: Aspartate carbamoyltransferase catalytic subunit (299 aa).

Carbamoyl phosphate-binding residues include R51 and T52. K79 is a binding site for L-aspartate. 3 residues coordinate carbamoyl phosphate: R101, H130, and Q133. Positions 163 and 215 each coordinate L-aspartate. 2 residues coordinate carbamoyl phosphate: G256 and P257.

It belongs to the aspartate/ornithine carbamoyltransferase superfamily. ATCase family. In terms of assembly, heterododecamer (2C3:3R2) of six catalytic PyrB chains organized as two trimers (C3), and six regulatory PyrI chains organized as three dimers (R2).

It catalyses the reaction carbamoyl phosphate + L-aspartate = N-carbamoyl-L-aspartate + phosphate + H(+). It functions in the pathway pyrimidine metabolism; UMP biosynthesis via de novo pathway; (S)-dihydroorotate from bicarbonate: step 2/3. Functionally, catalyzes the condensation of carbamoyl phosphate and aspartate to form carbamoyl aspartate and inorganic phosphate, the committed step in the de novo pyrimidine nucleotide biosynthesis pathway. The chain is Aspartate carbamoyltransferase catalytic subunit from Ehrlichia chaffeensis (strain ATCC CRL-10679 / Arkansas).